The following is a 554-amino-acid chain: Glutamine--tRNA ligase (554 aa).

Positions 34–44 (PEPNGYLHIGH) match the 'HIGH' region motif. ATP-binding positions include 35-37 (EPN) and 41-47 (HIGHAKS). L-glutamine contacts are provided by aspartate 67 and tyrosine 212. Residues threonine 231, 261-262 (RL), and 269-271 (MSK) each bind ATP. A 'KMSKS' region motif is present at residues 268 to 272 (VMSKR). Positions 317-324 (TKQDNTIE) are interaction with tRNA.

It belongs to the class-I aminoacyl-tRNA synthetase family. As to quaternary structure, monomer.

Its subcellular location is the cytoplasm. It carries out the reaction tRNA(Gln) + L-glutamine + ATP = L-glutaminyl-tRNA(Gln) + AMP + diphosphate. This is Glutamine--tRNA ligase from Shigella boydii serotype 18 (strain CDC 3083-94 / BS512).